The primary structure comprises 446 residues: Xylose isomerase 1 (446 aa).

Active-site residues include histidine 109 and aspartate 112. Mg(2+) is bound by residues glutamate 240, glutamate 276, histidine 279, aspartate 304, aspartate 315, aspartate 317, and aspartate 347.

It belongs to the xylose isomerase family. Homotetramer. Mg(2+) serves as cofactor.

The protein resides in the cytoplasm. The catalysed reaction is alpha-D-xylose = alpha-D-xylulofuranose. The protein is Xylose isomerase 1 of Xanthomonas campestris pv. campestris (strain 8004).